A 397-amino-acid polypeptide reads, in one-letter code: Fractalkine (397 aa).

A signal peptide spans 1-24; sequence MAPISLSWLLRLATFCHLTVLLAG. The chemokine and involved in interaction with ITGAV:ITGB3 and ITGA4:ITGB1 stretch occupies residues 25–100; it reads QHHGVTKCNI…RQAAALTRNG (76 aa). Over 25 to 341 the chain is Extracellular; it reads QHHGVTKCNI…PDAQAATRRQ (317 aa). Cystine bridges form between Cys32–Cys58 and Cys36–Cys74. Asn33 carries N-linked (GlcNAc...) asparagine glycosylation. The mucin-like stalk stretch occupies residues 101–341; it reads GTFEKQIGEV…PDAQAATRRQ (241 aa). Disordered stretches follow at residues 128–265 and 289–309; these read EPEA…REEM and VPVSSEGTPSREPVASGSWTP. Polar residues predominate over residues 133 to 147; the sequence is GESSSLEPTPSSQEA. Thr183 is a glycosylation site (O-linked (GalNAc...) threonine). Residues 193–202 are compositionally biased toward polar residues; that stretch reads TAATWQSSAP. Over residues 219–243 the composition is skewed to low complexity; sequence PSTQDPSTQASTASSPAPEENAPSE. O-linked (GalNAc...) serine glycosylation occurs at Ser253. The O-linked (GalNAc...) threonine glycan is linked to Thr329. A helical transmembrane segment spans residues 342–362; that stretch reads AVGLLAFLGLLFCLGVAMFTY. The Cytoplasmic segment spans residues 363-397; the sequence is QSLQGCPRKMAGEMAEGLRYIPRSCGSNSYVLVPV.

This sequence belongs to the intercrine delta family. As to quaternary structure, monomer. Forms a ternary complex with CX3CR1 and ITGAV:ITGB3 or ITGA4:ITGB1. In terms of assembly, (Microbial infection) Interacts with pox virus crmD; this inhibits cell migration mediated by CX3CL1. (Microbial infection) Interacts (via N-terminus) with human cytomegalovirus (HHV-5) US28. As to quaternary structure, (Microbial infection) Interacts with P.falciparum (strain 3D7) CBP1 and CBP2 (via their extracellular domains); the interaction mediates the adhesion of infected erythrocytes with endothelial cells. Post-translationally, a soluble short 95 kDa form may be released by proteolytic cleavage from the long membrane-anchored form. In terms of processing, O-glycosylated with core 1 or possibly core 8 glycans. Expressed in the seminal plasma, endometrial fluid and follicular fluid (at protein level). Small intestine, colon, testis, prostate, heart, brain, lung, skeletal muscle, kidney and pancreas. Most abundant in the brain and heart.

It is found in the cell membrane. Its subcellular location is the secreted. Its function is as follows. Chemokine that acts as a ligand for both CX3CR1 and integrins ITGAV:ITGB3 and ITGA4:ITGB1. The CX3CR1-CX3CL1 signaling exerts distinct functions in different tissue compartments, such as immune response, inflammation, cell adhesion and chemotaxis. Regulates leukocyte adhesion and migration processes at the endothelium. Can activate integrins in both a CX3CR1-dependent and CX3CR1-independent manner. In the presence of CX3CR1, activates integrins by binding to the classical ligand-binding site (site 1) in integrins. In the absence of CX3CR1, binds to a second site (site 2) in integrins which is distinct from site 1 and enhances the binding of other integrin ligands to site 1. In terms of biological role, the soluble form is chemotactic for T-cells and monocytes, but not for neutrophils. The membrane-bound form promotes adhesion of those leukocytes to endothelial cells. Functionally, (Microbial infection) Mediates the cytoadherence of erythrocytes infected with parasite P.falciparum (strain 3D7) with endothelial cells by interacting with P.falciparum CBP1 and CBP2 expressed at the surface of erythrocytes. The adhesion prevents the elimination of infected erythrocytes by the spleen. The sequence is that of Fractalkine from Homo sapiens (Human).